The primary structure comprises 603 residues: Protein SHORT-ROOT 2 (603 aa).

2 disordered regions span residues 11-58 and 106-140; these read HHHH…HSHS and DFSS…SSAG. Positions 31–44 are enriched in low complexity; sequence SYPSSRGSTSSPSS. A compositionally biased stretch (basic residues) spans 45 to 58; it reads HHTHNHTYYHHSHS. The span at 108–125 shows a compositional bias: low complexity; the sequence is SSSSSSRQFHSGTGAPSS. Residues 179–602 form the GRAS domain; the sequence is AAPSSSGRWA…QPVVWASAWK (424 aa). Positions 186–249 are leucine repeat I (LRI); the sequence is RWAAQLLMEC…LTTSGPRTLR (64 aa). Residues 268–354 form a VHIID region; the sequence is ALKFQELSPW…DTPHLSITTV (87 aa). The short motif at 318 to 322 is the VHIID element; that stretch reads LHILD. The interval 370–406 is leucine repeat II (LRII); sequence EIGQRLEKFARLMGVPFSFRAVHHSGDLADLDLAALD. The PFYRE stretch occupies residues 416-514; that stretch reads LAVNCVNALR…ERAVGRAIVD (99 aa). The SAW stretch occupies residues 517-602; it reads SCPASQSAER…QPVVWASAWK (86 aa).

The protein belongs to the GRAS family. In terms of assembly, does not interact with SCR1.

Its subcellular location is the nucleus. Functionally, putative transcription factor involved in asymmetric cell division. The protein is Protein SHORT-ROOT 2 (SHR2) of Oryza sativa subsp. japonica (Rice).